Reading from the N-terminus, the 508-residue chain is Photosystem II CP47 reaction center protein (508 aa).

6 consecutive transmembrane segments (helical) span residues 21–36 (AVHL…WAGS), 101–115 (IVLS…IWHW), 140–156 (GIHL…FGAF), 203–218 (IAAG…FHLS), 237–252 (VLSS…AFVV), and 457–472 (TFAL…HGAR).

The protein belongs to the PsbB/PsbC family. PsbB subfamily. In terms of assembly, PSII is composed of 1 copy each of membrane proteins PsbA, PsbB, PsbC, PsbD, PsbE, PsbF, PsbH, PsbI, PsbJ, PsbK, PsbL, PsbM, PsbT, PsbX, PsbY, PsbZ, Psb30/Ycf12, at least 3 peripheral proteins of the oxygen-evolving complex and a large number of cofactors. It forms dimeric complexes. Requires Binds multiple chlorophylls. PSII binds additional chlorophylls, carotenoids and specific lipids. as cofactor.

Its subcellular location is the plastid. The protein localises to the chloroplast thylakoid membrane. One of the components of the core complex of photosystem II (PSII). It binds chlorophyll and helps catalyze the primary light-induced photochemical processes of PSII. PSII is a light-driven water:plastoquinone oxidoreductase, using light energy to abstract electrons from H(2)O, generating O(2) and a proton gradient subsequently used for ATP formation. The chain is Photosystem II CP47 reaction center protein from Marchantia polymorpha (Common liverwort).